Here is a 68-residue protein sequence, read N- to C-terminus: Large ribosomal subunit protein bL31 (68 aa).

Positions 17, 19, 37, and 40 each coordinate Zn(2+).

Belongs to the bacterial ribosomal protein bL31 family. Type A subfamily. In terms of assembly, part of the 50S ribosomal subunit. The cofactor is Zn(2+).

Its function is as follows. Binds the 23S rRNA. In Dehalococcoides mccartyi (strain ATCC BAA-2266 / KCTC 15142 / 195) (Dehalococcoides ethenogenes (strain 195)), this protein is Large ribosomal subunit protein bL31.